The sequence spans 155 residues: 2-C-methyl-D-erythritol 2,4-cyclodiphosphate synthase (155 aa).

A divalent metal cation contacts are provided by Asp8 and His10. 4-CDP-2-C-methyl-D-erythritol 2-phosphate contacts are provided by residues 8–10 (DVH) and 34–35 (HS). His42 is an a divalent metal cation binding site. 4-CDP-2-C-methyl-D-erythritol 2-phosphate-binding positions include 56 to 58 (DIG), 61 to 65 (FPDSD), 132 to 135 (TTEE), Phe139, and Arg142.

Belongs to the IspF family. As to quaternary structure, homotrimer. A divalent metal cation is required as a cofactor.

The enzyme catalyses 4-CDP-2-C-methyl-D-erythritol 2-phosphate = 2-C-methyl-D-erythritol 2,4-cyclic diphosphate + CMP. The protein operates within isoprenoid biosynthesis; isopentenyl diphosphate biosynthesis via DXP pathway; isopentenyl diphosphate from 1-deoxy-D-xylulose 5-phosphate: step 4/6. Its function is as follows. Involved in the biosynthesis of isopentenyl diphosphate (IPP) and dimethylallyl diphosphate (DMAPP), two major building blocks of isoprenoid compounds. Catalyzes the conversion of 4-diphosphocytidyl-2-C-methyl-D-erythritol 2-phosphate (CDP-ME2P) to 2-C-methyl-D-erythritol 2,4-cyclodiphosphate (ME-CPP) with a corresponding release of cytidine 5-monophosphate (CMP). The sequence is that of 2-C-methyl-D-erythritol 2,4-cyclodiphosphate synthase from Clostridium acetobutylicum (strain ATCC 824 / DSM 792 / JCM 1419 / IAM 19013 / LMG 5710 / NBRC 13948 / NRRL B-527 / VKM B-1787 / 2291 / W).